Consider the following 278-residue polypeptide: Methyltransferase adrK (278 aa).

Residues 124 to 125 (DL), 151 to 152 (DV), and 152 to 153 (VL) each bind S-adenosyl-L-methionine.

The protein belongs to the class I-like SAM-binding methyltransferase superfamily. In terms of assembly, homodimer.

It functions in the pathway secondary metabolite biosynthesis; terpenoid biosynthesis. In terms of biological role, methyltransferase; part of the gene cluster that mediates the biosynthesis of andrastins, meroterpenoid compounds that exhibit inhibitory activity against ras farnesyltransferase, suggesting that they could be promising leads for antitumor agents. The first step of the pathway is the synthesis of 3,5-dimethylorsellinic acid (DMOA) by the polyketide synthase adrD via condensation of one acetyl-CoA starter unit with 3 malonyl-CoA units and 2 methylations. DMAO is then converted to farnesyl-DMAO by the prenyltransferase adrG. The methyltransferase adrK catalyzes the methylation of the carboxyl group of farnesyl-DMAO to farnesyl-DMAO methyl ester which is further converted to epoxyfarnesyl-DMAO methyl ester by the FAD-dependent monooxygenase adrH. The terpene cyclase adrI then catalyzes the carbon skeletal rearrangement to generate the andrastin E, the first compound in the pathway having the andrastin scaffold, with the tetracyclic ring system. The post-cyclization tailoring enzymes adrF, adrE, adrJ, and adrA, are involved in the conversion of andrastin E into andrastin A. The short chain dehydrogenase adrF is responsible for the oxidation of the C-3 a hydroxyl group of andrastin E to yield the corresponding ketone, andrastin D. The ketoreductase adrE stereoselectively reduces the carbonyl moiety to reverse the stereochemistry of the C-3 position to yield andrastin F. The acetyltransferase adrJ is the acetyltransferase that attaches the acetyl group to the C-3 hydroxyl group of andrastin F to yield andrastin C. Finally, the cytochrome P450 monooxygenase adrA catalyzes two sequential oxidation reactions of the C-23 methyl group, to generate the corresponding alcohol andrastin B, and aldehyde andrastin A. The polypeptide is Methyltransferase adrK (Penicillium roqueforti).